The sequence spans 137 residues: Small ribosomal subunit protein uS12 (137 aa).

The interval 1 to 57 (MPTINQLVRKPRQSKIKKSDSPALNKGFNSKKKKFTDLNSPQKRGVCTRVGTMTPRK) is disordered. At Asp102 the chain carries 3-methylthioaspartic acid. The disordered stretch occupies residues 118–137 (SGVDGRRQGRSLYGTKKPKN).

This sequence belongs to the universal ribosomal protein uS12 family. In terms of assembly, part of the 30S ribosomal subunit. Contacts proteins S8 and S17. May interact with IF1 in the 30S initiation complex.

With S4 and S5 plays an important role in translational accuracy. Functionally, interacts with and stabilizes bases of the 16S rRNA that are involved in tRNA selection in the A site and with the mRNA backbone. Located at the interface of the 30S and 50S subunits, it traverses the body of the 30S subunit contacting proteins on the other side and probably holding the rRNA structure together. The combined cluster of proteins S8, S12 and S17 appears to hold together the shoulder and platform of the 30S subunit. The sequence is that of Small ribosomal subunit protein uS12 from Staphylococcus aureus (strain COL).